A 617-amino-acid chain; its full sequence is KIF-binding protein (617 aa).

The disordered stretch occupies residues 48–83; the sequence is ALLGPAPEDDDERAADDGPVDQALGAGEPRDAEGPG. A Phosphoserine modification is found at serine 174.

It belongs to the KIF-binding protein family. In terms of assembly, interacts with KIF1B; positively regulates KIF1B microtubule motor activity. Interacts with STMN2.

The protein localises to the cytoplasm. It is found in the cytoskeleton. Functionally, activator of KIF1B plus-end-directed microtubule motor activity. Required for organization of axonal microtubules, and axonal outgrowth and maintenance during peripheral and central nervous system development. The protein is KIF-binding protein (Kifbp) of Rattus norvegicus (Rat).